The chain runs to 519 residues: 2-isopropylmalate synthase (519 aa).

Positions 5–267 constitute a Pyruvate carboxyltransferase domain; sequence VIIFDTTLRD…YTNIHHHEIY (263 aa). The Mn(2+) site is built by Asp14, His202, His204, and Asn238. A regulatory domain region spans residues 392–519; it reads ALESFHIHST…NHKNTQHIKK (128 aa).

It belongs to the alpha-IPM synthase/homocitrate synthase family. LeuA type 1 subfamily. As to quaternary structure, homodimer. Requires Mn(2+) as cofactor.

The protein localises to the cytoplasm. It carries out the reaction 3-methyl-2-oxobutanoate + acetyl-CoA + H2O = (2S)-2-isopropylmalate + CoA + H(+). Its pathway is amino-acid biosynthesis; L-leucine biosynthesis; L-leucine from 3-methyl-2-oxobutanoate: step 1/4. Catalyzes the condensation of the acetyl group of acetyl-CoA with 3-methyl-2-oxobutanoate (2-ketoisovalerate) to form 3-carboxy-3-hydroxy-4-methylpentanoate (2-isopropylmalate). The chain is 2-isopropylmalate synthase from Blochmanniella floridana.